Reading from the N-terminus, the 135-residue chain is 6-pyruvoyl tetrahydrobiopterin synthase (135 aa).

A Zn(2+)-binding site is contributed by histidine 17. Cysteine 36 acts as the Proton acceptor in catalysis. Residues histidine 40 and histidine 42 each coordinate Zn(2+). Active-site charge relay system residues include histidine 81 and glutamate 124.

Belongs to the PTPS family. Homohexamer formed of two homotrimers in a head to head fashion. Zn(2+) is required as a cofactor.

The enzyme catalyses 7,8-dihydroneopterin 3'-triphosphate = 6-pyruvoyl-5,6,7,8-tetrahydropterin + triphosphate + H(+). The protein operates within cofactor biosynthesis; tetrahydrobiopterin biosynthesis; tetrahydrobiopterin from 7,8-dihydroneopterin triphosphate: step 1/3. Its function is as follows. Involved in the biosynthesis of tetrahydrobiopterin, an essential cofactor of aromatic amino acid hydroxylases. Catalyzes the transformation of 7,8-dihydroneopterin triphosphate into 6-pyruvoyl tetrahydropterin. In Dictyostelium discoideum (Social amoeba), this protein is 6-pyruvoyl tetrahydrobiopterin synthase (ptsA).